The sequence spans 612 residues: MSQIILDNISQNETVYNRFVIIHGRVGPRASYCPQTINVKHHENSFPEQTWVVTDLYFKAIIHVVPGDNTILFTTDDGGKLELQVYYQLLVDNPFYCIAFIVGKDSDLSFDAPHGAKNDIDEGIRKLRCAAYLWQAFTAECMYRNGYGRRSFRIEESVQPDTMSCLSPWGTERLTATINILRSDKTAEEIRSVPPDQLFHIAGDAVDKLHLPEPWHYMCMFLDTRYDPSTQKIRGHVALGGGTDMHKLGVFGSHSLHSFPSALEYVVPVFSDARRIPSYLANDANESSTIWECANIGIGAMLHELGHTLGCPHQPDGIMLRSYPIFNRSFTTREFECVRTGSKGLAPVLAKDECSWHHLDMLRFFYHPCFKLPSDPTYPSDIETNYFVKGETITFVNSTGIFLIEIEYNGQTKGWKEFNPPVGEASLTDAEIRSLSNASSNQDYRVRVLSRNFKCIDLNNVPEIIKNAKVESSFGTVYRSERYGLRGCNGKELSNILIAPEKFKPTKIRVHCGLALDGIEVFFGDESVLLGNRGGSPHDFEIQGSQIVGFQIRCGAWVDGISIVLENGKTSPFYGNANGGGLKSYLVPKGFQLVGFYGTLGPFMDSIGFFIK.

H303 provides a ligand contact to Zn(2+). Residue E304 is part of the active site. Residues H307 and H313 each coordinate Zn(2+). A Jacalin-type lectin domain is found at 477 to 612 (VYRSERYGLR…FMDSIGFFIK (136 aa)).

The protein belongs to the peptidase M10B family. It depends on Zn(2+) as a cofactor.

This chain is Putative zinc metalloproteinase C607.06c, found in Schizosaccharomyces pombe (strain 972 / ATCC 24843) (Fission yeast).